The primary structure comprises 353 residues: MTAILERRESASLWNRFCDWITSTENRLYIGWFGVLMIPTLLTATSVFIIAFIAAPPVDIDGIREPVSGSLLYGNNIISGAIIPTSAAIGLHFYPIWEAASVDEWLYNGGPYELIVLHFLLGVACYMGREWELSFRLGMRPWIAVAYSAPVAAATAVFLIYPIGQGSFSDGMPLGISGTFNFMIVFQAEHNILMHPFHMLGVAGVFGGSLFSAMHGSLVTSSLIRETTENESANAGYKFGQEEETYNIVAAHGYFGRLIFQYASFNNSRSLHFFLAAWPVVGIWFTALGISTMAFNLNGFNFNQSVVDSQGRVINTWADIINRANLGMEVMHERNAHNFPLDLAAVEANSIDG.

Threonine 2 is modified (N-acetylthreonine). At threonine 2 the chain carries Phosphothreonine. Transmembrane regions (helical) follow at residues 29–46 (YIGW…TATS), 118–133 (HFLL…EWEL), and 142–156 (WIAV…AATA). Histidine 118 provides a ligand contact to chlorophyll a. Tyrosine 126 provides a ligand contact to pheophytin a. 2 residues coordinate [CaMn4O5] cluster: aspartate 170 and glutamate 189. Residues 197-218 (FHMLGVAGVFGGSLFSAMHGSL) traverse the membrane as a helical segment. Histidine 198 is a chlorophyll a binding site. Residues histidine 215 and 264–265 (SF) contribute to the a quinone site. A Fe cation-binding site is contributed by histidine 215. Histidine 272 is a Fe cation binding site. Residues 274–288 (FLAAWPVVGIWFTAL) traverse the membrane as a helical segment. The [CaMn4O5] cluster site is built by histidine 332, glutamate 333, aspartate 342, and alanine 344. The propeptide occupies 345–353 (AVEANSIDG).

The protein belongs to the reaction center PufL/M/PsbA/D family. As to quaternary structure, PSII is composed of 1 copy each of membrane proteins PsbA, PsbB, PsbC, PsbD, PsbE, PsbF, PsbH, PsbI, PsbJ, PsbK, PsbL, PsbM, PsbT, PsbX, PsbY, PsbZ, Psb30/Ycf12, at least 3 peripheral proteins of the oxygen-evolving complex and a large number of cofactors. It forms dimeric complexes. The cofactor is The D1/D2 heterodimer binds P680, chlorophylls that are the primary electron donor of PSII, and subsequent electron acceptors. It shares a non-heme iron and each subunit binds pheophytin, quinone, additional chlorophylls, carotenoids and lipids. D1 provides most of the ligands for the Mn4-Ca-O5 cluster of the oxygen-evolving complex (OEC). There is also a Cl(-1) ion associated with D1 and D2, which is required for oxygen evolution. The PSII complex binds additional chlorophylls, carotenoids and specific lipids.. Tyr-161 forms a radical intermediate that is referred to as redox-active TyrZ, YZ or Y-Z. Post-translationally, C-terminally processed by CTPA; processing is essential to allow assembly of the oxygen-evolving complex and thus photosynthetic growth.

Its subcellular location is the plastid. It localises to the chloroplast thylakoid membrane. It catalyses the reaction 2 a plastoquinone + 4 hnu + 2 H2O = 2 a plastoquinol + O2. In terms of biological role, photosystem II (PSII) is a light-driven water:plastoquinone oxidoreductase that uses light energy to abstract electrons from H(2)O, generating O(2) and a proton gradient subsequently used for ATP formation. It consists of a core antenna complex that captures photons, and an electron transfer chain that converts photonic excitation into a charge separation. The D1/D2 (PsbA/PsbD) reaction center heterodimer binds P680, the primary electron donor of PSII as well as several subsequent electron acceptors. The chain is Photosystem II protein D1 from Cryptomeria japonica (Japanese cedar).